The primary structure comprises 637 residues: Chaperone protein DnaK (637 aa).

Thr-198 carries the phosphothreonine; by autocatalysis modification. The segment at 597–637 is disordered; it reads MYQQAAQESGQTEGAAQDPKGAAQDDDVVDADFEEVKDHKK. Positions 600 to 610 are enriched in polar residues; that stretch reads QAAQESGQTEG. Residues 620–629 show a composition bias toward acidic residues; it reads QDDDVVDADF.

Belongs to the heat shock protein 70 family.

In terms of biological role, acts as a chaperone. The polypeptide is Chaperone protein DnaK (Desulforapulum autotrophicum (strain ATCC 43914 / DSM 3382 / VKM B-1955 / HRM2) (Desulfobacterium autotrophicum)).